The primary structure comprises 127 residues: Tyrosine-protein phosphatase 2 (127 aa).

Residues Q1–V127 enclose the Tyrosine-protein phosphatase domain. Over residues V63 to P81 the composition is skewed to acidic residues. The segment at V63–E82 is disordered.

This sequence belongs to the protein-tyrosine phosphatase family.

It carries out the reaction O-phospho-L-tyrosyl-[protein] + H2O = L-tyrosyl-[protein] + phosphate. This chain is Tyrosine-protein phosphatase 2 (STY-2), found in Styela plicata (Wrinkled sea squirt).